Here is a 445-residue protein sequence, read N- to C-terminus: Transmembrane protein 184C (445 aa).

The next 7 membrane-spanning stretches (helical) occupy residues 15–35 (LVVLLYIVGLLVVVPLCVWEL), 46–66 (AWFIAGIFLLMTIPISLWGIL), 84–104 (ILWMVPIYSLDSWIALKYPNI), 177–197 (YTVVRPFTTIIALICELVGVY), 210–230 (YLVILNNMSQLFAMYCLVLFY), 252–272 (VVFVSFWQAVLIALLVKVGVI), and 285–305 (AVATGLQDFIICVEMFLAAIA). Disordered stretches follow at residues 369-393 (EHTSLLSSSTQDPISDASSMPSSPM) and 421-445 (TSATRDTEESPELMHNSSEKALDRS). Residues 370–390 (HTSLLSSSTQDPISDASSMPS) show a composition bias toward polar residues.

Belongs to the TMEM184 family.

It is found in the membrane. In terms of biological role, may play a role in cell growth. The sequence is that of Transmembrane protein 184C (TMEM184C) from Gallus gallus (Chicken).